The following is a 567-amino-acid chain: Myo-inositol transporter 1 (567 aa).

Residues 1–88 are Cytoplasmic-facing; it reads MSARPAQPNI…KFVWMLVSAA (88 aa). The interval 14-42 is disordered; sequence IRTSLSGYPSPTHSGSSTPASLEFSDGRL. Positions 16 to 33 are enriched in polar residues; that stretch reads TSLSGYPSPTHSGSSTPA. Residues 89–109 form a helical membrane-spanning segment; that stretch reads AISGLLFGYDTAAISGMLVII. At 110 to 123 the chain is on the extracellular side; the sequence is KDDLGTILSSWQKE. Residues 124–144 form a helical membrane-spanning segment; sequence VITSATTLGALLGGLAAGCVS. The Cytoplasmic segment spans residues 145–150; it reads DFTGRR. A helical membrane pass occupies residues 151 to 171; the sequence is LVIVFANVAFIGGSICQAACH. The Extracellular portion of the chain corresponds to 172-180; the sequence is TVAAMIAGR. Residues 181–201 traverse the membrane as a helical segment; it reads FIVGLGVGLASCIVPLYIGEL. Topologically, residues 202–209 are cytoplasmic; that stretch reads APTMIRGR. Residues 210–230 form a helical membrane-spanning segment; that stretch reads LVTINCVAVTLGQVVAYAIGA. The Extracellular portion of the chain corresponds to 231–240; it reads SFQNVHNGWR. Residues 241–261 form a helical membrane-spanning segment; it reads WIVGLGAMPSFVQLAAIGFLP. At 262–343 the chain is on the cytoplasmic side; that stretch reads ESPRILLLRS…IGCGLQAAQQ (82 aa). Residues 344-364 form a helical membrane-spanning segment; the sequence is LCGFNTLMYYSATIFAMLGFN. An N-linked (GlcNAc...) asparagine glycan is attached at Asn-365. Topologically, residues 365 to 367 are extracellular; that stretch reads NAT. A helical transmembrane segment spans residues 368 to 388; it reads AVGLIVATVNVLFTLVALKIV. Residues 389–397 lie on the Cytoplasmic side of the membrane; the sequence is DPVGRRRTM. The chain crosses the membrane as a helical span at residues 398–418; that stretch reads LFTLPIMILALVFAAIFFYYL. Residues 419-435 lie on the Extracellular side of the membrane; sequence TLSTNGILIEDHDYPRS. The chain crosses the membrane as a helical span at residues 436-456; that stretch reads LSILVLLSMLLYVAGYATGLG. Residues 457 to 476 lie on the Cytoplasmic side of the membrane; the sequence is NIPWQQGELFRLEVRGIGTS. The chain crosses the membrane as a helical span at residues 477–497; sequence ICTAVNWSCNMLIAGTFLSLM. Over 498–503 the chain is Extracellular; sequence DAATPS. Residues 504–524 form a helical membrane-spanning segment; it reads GAFGIYAGFCVIGWVFCWMLY. Topologically, residues 525–567 are cytoplasmic; that stretch reads PETSGLSLEEVYFVFEEGFGIKKSQQLRKQKLVEAAKLKAIFE.

This sequence belongs to the major facilitator superfamily. Sugar transporter (TC 2.A.1.1) family.

The protein localises to the cell membrane. The catalysed reaction is myo-inositol(out) + H(+)(out) = myo-inositol(in) + H(+)(in). Functionally, may function as a transporter or as a sensor for myo-inositol. This Cryptococcus neoformans var. grubii serotype A (strain H99 / ATCC 208821 / CBS 10515 / FGSC 9487) (Filobasidiella neoformans var. grubii) protein is Myo-inositol transporter 1.